Reading from the N-terminus, the 660-residue chain is MFSTATSPYDDLVIKATDENLASEDWALNMDVCDKVSSDGQNGARQAVTALQKRLSHRNPNVQIYALELANSLAQNCGKDLLGELSSRNWTSALDRLINDRATSTPVKKKALSFVKSWAKQIEETGDPNLGLMGELYDQLRAKNHVFDEPEPTPESAEEARRRQEEEELQRVLELSKQDKGGRSLFTYQPSGSAGASSSSAANNNTSPSIPQSQAQPLAQDQAQSQAAPQVTGYAPQPQKIYSPQPLEPEPPRVDLNTATCVRAIYPFTGQEVGELDFERGDVIKVLDRGFKEWWRGACNGKIGIFPVTYVEALPEPTPKELQEKAQEEARVFASLGLVDQLLQTLKGIDPARGDKLDDHPEIEEMYQASVALQGQINTLIKKYSDQKAELEHMNANFIRAMGQYEELRNGPPLVQAQPFGYVPPQPQPLLQQQNSYSYQQYPQQPQQQPQPYAQAPYAQQAQPQLQPEQYAQQTPSPAAQSQASYTAQQQPYPAQVQQDPAAASPPPNQPFYHHGGSTTSVNRIPSAQTAVQPQPHGAPSFPPSSPPTRQVTEPGVAGLGAGDQQAWDQYYQQHGQQAPHSSQHPSQPQSQPQSQPQSQPQSQQGSYYPAHAQAQGYQAAYATVPDGRAYASPPLPGTQQGQGVEGVTAGMDRMSVHAP.

Residues 16-148 (ATDENLASED…QLRAKNHVFD (133 aa)) form the VHS domain. The segment at 146–254 (VFDEPEPTPE…QPLEPEPPRV (109 aa)) is disordered. The segment covering 158-182 (EEARRRQEEEELQRVLELSKQDKGG) has biased composition (basic and acidic residues). The UIM domain maps to 164–183 (QEEEELQRVLELSKQDKGGR). The segment covering 190-230 (PSGSAGASSSSAANNNTSPSIPQSQAQPLAQDQAQSQAAPQ) has biased composition (low complexity). The region spanning 257 to 316 (NTATCVRAIYPFTGQEVGELDFERGDVIKVLDRGFKEWWRGACNGKIGIFPVTYVEALPE) is the SH3 domain. The segment covering 437–503 (YSYQQYPQQP…PAQVQQDPAA (67 aa)) has biased composition (low complexity). Residues 437-660 (YSYQQYPQQP…GMDRMSVHAP (224 aa)) are disordered. Residues 517 to 533 (GSTTSVNRIPSAQTAVQ) show a composition bias toward polar residues. 2 stretches are compositionally biased toward low complexity: residues 573-623 (QQHG…AAYA) and 638-651 (GTQQ…VTAG).

It belongs to the STAM family. In terms of assembly, component of the ESCRT-0 complex composed of HSE1 and VPS27.

The protein resides in the endosome membrane. Functionally, component of the ESCRT-0 complex which is the sorting receptor for ubiquitinated cargo proteins at the multivesicular body (MVB). The polypeptide is Class E vacuolar protein-sorting machinery protein HSE1 (HSE1) (Cryptococcus neoformans var. neoformans serotype D (strain B-3501A) (Filobasidiella neoformans)).